Reading from the N-terminus, the 198-residue chain is MAERKGEIIRKTNETSVSVRVDIDGTGKSKISTGVGFFDHMLDQLSRHSLIDMDIEVQGDLHIDDHHTVEDTGIAIGQAIAKALGDRRGITRYASLDLAMDETMTKAAVDISGRPFLVWNVNFSAPKIGTFDTELVREFFQALAQNAGITLHILNHYGANNHHIAETCFKAVARVLRTATEIDPRQAGRVPSTKGMLA.

The protein belongs to the imidazoleglycerol-phosphate dehydratase family.

Its subcellular location is the cytoplasm. The catalysed reaction is D-erythro-1-(imidazol-4-yl)glycerol 3-phosphate = 3-(imidazol-4-yl)-2-oxopropyl phosphate + H2O. Its pathway is amino-acid biosynthesis; L-histidine biosynthesis; L-histidine from 5-phospho-alpha-D-ribose 1-diphosphate: step 6/9. In Agrobacterium fabrum (strain C58 / ATCC 33970) (Agrobacterium tumefaciens (strain C58)), this protein is Imidazoleglycerol-phosphate dehydratase.